We begin with the raw amino-acid sequence, 713 residues long: Ribosomal RNA large subunit methyltransferase K/L (713 aa).

Residues 43 to 154 (LAYRITLWTR…NGVITIAMNF (112 aa)) enclose the THUMP domain.

It belongs to the methyltransferase superfamily. RlmKL family.

Its subcellular location is the cytoplasm. The catalysed reaction is guanosine(2445) in 23S rRNA + S-adenosyl-L-methionine = N(2)-methylguanosine(2445) in 23S rRNA + S-adenosyl-L-homocysteine + H(+). It carries out the reaction guanosine(2069) in 23S rRNA + S-adenosyl-L-methionine = N(2)-methylguanosine(2069) in 23S rRNA + S-adenosyl-L-homocysteine + H(+). In terms of biological role, specifically methylates the guanine in position 2445 (m2G2445) and the guanine in position 2069 (m7G2069) of 23S rRNA. This chain is Ribosomal RNA large subunit methyltransferase K/L, found in Shewanella sp. (strain ANA-3).